Reading from the N-terminus, the 874-residue chain is Alanine--tRNA ligase (874 aa).

4 residues coordinate Zn(2+): His-562, His-566, Cys-663, and His-667.

The protein belongs to the class-II aminoacyl-tRNA synthetase family. Requires Zn(2+) as cofactor.

The protein resides in the cytoplasm. The enzyme catalyses tRNA(Ala) + L-alanine + ATP = L-alanyl-tRNA(Ala) + AMP + diphosphate. Its function is as follows. Catalyzes the attachment of alanine to tRNA(Ala) in a two-step reaction: alanine is first activated by ATP to form Ala-AMP and then transferred to the acceptor end of tRNA(Ala). Also edits incorrectly charged Ser-tRNA(Ala) and Gly-tRNA(Ala) via its editing domain. The polypeptide is Alanine--tRNA ligase (Bordetella pertussis (strain Tohama I / ATCC BAA-589 / NCTC 13251)).